Reading from the N-terminus, the 98-residue chain is Ferredoxin-3 (98 aa).

4Fe-4S ferredoxin-type domains lie at 18 to 47 and 66 to 95; these read FVEA…LQAL and VMSI…HSPL. The [4Fe-4S] cluster site is built by C27, C30, C33, C37, C75, C78, C81, and C85.

Homodimer. The cofactor is [4Fe-4S] cluster.

In terms of biological role, ferredoxins are iron-sulfur proteins that transfer electrons in a wide variety of metabolic reactions. This Trichormus variabilis (strain ATCC 29413 / PCC 7937) (Anabaena variabilis) protein is Ferredoxin-3 (fdxB).